We begin with the raw amino-acid sequence, 1246 residues long: DNA-directed RNA polymerase subunit beta (1246 aa).

The segment at Ile-1171 to Ala-1246 is disordered. Acidic residues-rich tracts occupy residues Asp-1202 to Glu-1223 and Glu-1230 to Gly-1240.

The protein belongs to the RNA polymerase beta chain family. In terms of assembly, the RNAP catalytic core consists of 2 alpha, 1 beta, 1 beta' and 1 omega subunit. When a sigma factor is associated with the core the holoenzyme is formed, which can initiate transcription.

It catalyses the reaction RNA(n) + a ribonucleoside 5'-triphosphate = RNA(n+1) + diphosphate. Functionally, DNA-dependent RNA polymerase catalyzes the transcription of DNA into RNA using the four ribonucleoside triphosphates as substrates. The polypeptide is DNA-directed RNA polymerase subunit beta (Alkaliphilus metalliredigens (strain QYMF)).